A 658-amino-acid polypeptide reads, in one-letter code: Threonine--tRNA ligase (658 aa).

The region spanning 1–63 is the TGS domain; the sequence is MDQITITFPD…DDNASIDFVA (63 aa). The catalytic stretch occupies residues 245 to 548; the sequence is DHRKLGRELD…LIEHYAGNFP (304 aa). 3 residues coordinate Zn(2+): cysteine 341, histidine 392, and histidine 525.

The protein belongs to the class-II aminoacyl-tRNA synthetase family. As to quaternary structure, homodimer. It depends on Zn(2+) as a cofactor.

It localises to the cytoplasm. It catalyses the reaction tRNA(Thr) + L-threonine + ATP = L-threonyl-tRNA(Thr) + AMP + diphosphate + H(+). Catalyzes the attachment of threonine to tRNA(Thr) in a two-step reaction: L-threonine is first activated by ATP to form Thr-AMP and then transferred to the acceptor end of tRNA(Thr). Also edits incorrectly charged L-seryl-tRNA(Thr). The sequence is that of Threonine--tRNA ligase from Rhodopseudomonas palustris (strain ATCC BAA-98 / CGA009).